We begin with the raw amino-acid sequence, 783 residues long: Protein SEY1 (783 aa).

The Cytoplasmic portion of the chain corresponds to 1–677 (MTSQAIQLID…KRSIVTSSTH (677 aa)). The GB1/RHD3-type G domain occupies 33-265 (GFNYHVISVF…YLLKPNYHHK (233 aa)). 43 to 50 (GSQSSGKS) serves as a coordination point for GTP. Residues 449–472 (HEKKLQLRESELNALLSKIKKQLT) are a coiled coil. The helical transmembrane segment at 678–698 (IPIWIYAVIVVLGWNEFMIVI) threads the bilayer. Residues 699–701 (RNP) are Lumenal-facing. Residues 702–722 (LFVTLALLSIVSFYFIQKFGL) form a helical membrane-spanning segment. Residues 723–783 (WGPVMNVVNT…SSSSGNEDSD (61 aa)) lie on the Cytoplasmic side of the membrane.

Belongs to the TRAFAC class dynamin-like GTPase superfamily. GB1/RHD3 GTPase family. RHD3 subfamily.

It is found in the endoplasmic reticulum membrane. Functionally, cooperates with the reticulon proteins and tubule-shaping DP1 family proteins to generate and maintain the structure of the tubular endoplasmic reticulum network. Has GTPase activity, which is required for its function in ER organization. The chain is Protein SEY1 from Candida glabrata (strain ATCC 2001 / BCRC 20586 / JCM 3761 / NBRC 0622 / NRRL Y-65 / CBS 138) (Yeast).